An 83-amino-acid polypeptide reads, in one-letter code: Sulfur carrier protein TusA (83 aa).

Residue Cys20 is the Cysteine persulfide intermediate of the active site.

It belongs to the sulfur carrier protein TusA family.

It localises to the cytoplasm. Sulfur carrier protein which probably makes part of a sulfur-relay system. The polypeptide is Sulfur carrier protein TusA (Pseudoalteromonas atlantica (strain T6c / ATCC BAA-1087)).